The sequence spans 404 residues: S-adenosylmethionine synthase (404 aa).

Residue His-18 participates in ATP binding. Asp-20 provides a ligand contact to Mg(2+). Glu-46 is a K(+) binding site. Residues Glu-59 and Gln-102 each coordinate L-methionine. Positions 102–112 are flexible loop; it reads QSPEIAQGVDH. Residues 178–180, 249–250, Asp-258, 264–265, Ala-281, and Lys-285 each bind ATP; these read DGK, KF, and RK. Asp-258 lines the L-methionine pocket. Lys-289 provides a ligand contact to L-methionine.

Belongs to the AdoMet synthase family. In terms of assembly, homotetramer; dimer of dimers. It depends on Mg(2+) as a cofactor. Requires K(+) as cofactor.

The protein resides in the cytoplasm. The enzyme catalyses L-methionine + ATP + H2O = S-adenosyl-L-methionine + phosphate + diphosphate. The protein operates within amino-acid biosynthesis; S-adenosyl-L-methionine biosynthesis; S-adenosyl-L-methionine from L-methionine: step 1/1. In terms of biological role, catalyzes the formation of S-adenosylmethionine (AdoMet) from methionine and ATP. The overall synthetic reaction is composed of two sequential steps, AdoMet formation and the subsequent tripolyphosphate hydrolysis which occurs prior to release of AdoMet from the enzyme. This Rhodococcus jostii (strain RHA1) protein is S-adenosylmethionine synthase.